The chain runs to 62 residues: Large ribosomal subunit protein bL35 (62 aa).

A compositionally biased stretch (basic residues) spans 1–26 (MPKMKTKSGLKKRIKITATGKVKRGN). The interval 1–62 (MPKMKTKSGL…SDFKRYKELI (62 aa)) is disordered. Residues 53 to 62 (SDFKRYKELI) show a composition bias toward basic and acidic residues.

This sequence belongs to the bacterial ribosomal protein bL35 family.

This chain is Large ribosomal subunit protein bL35, found in Metamycoplasma arthritidis (strain 158L3-1) (Mycoplasma arthritidis).